Here is a 25-residue protein sequence, read N- to C-terminus: Caerin-1.7 (25 aa).

Leucine amide is present on leucine 25.

Belongs to the frog skin active peptide (FSAP) family. Caerin subfamily. Post-translationally, caerin-1.7.1 does not have any antibacterial activity. Expressed by the skin dorsal glands.

It is found in the secreted. Antibacterial peptide, that adopts an alpha helical conformation which can disrupt bacterial membranes. Each caerin displays a different antimicrobial specificity. This Ranoidea xanthomera (Northern orange-eyed tree frog) protein is Caerin-1.7.